A 476-amino-acid polypeptide reads, in one-letter code: ATP synthase subunit beta 2 (476 aa).

160 to 167 (GGAGVGKT) is an ATP binding site.

It belongs to the ATPase alpha/beta chains family. As to quaternary structure, F-type ATPases have 2 components, CF(1) - the catalytic core - and CF(0) - the membrane proton channel. CF(1) has five subunits: alpha(3), beta(3), gamma(1), delta(1), epsilon(1). CF(0) has four main subunits: a(1), b(1), b'(1) and c(9-12).

The protein localises to the cell inner membrane. The enzyme catalyses ATP + H2O + 4 H(+)(in) = ADP + phosphate + 5 H(+)(out). In terms of biological role, produces ATP from ADP in the presence of a proton gradient across the membrane. The catalytic sites are hosted primarily by the beta subunits. The protein is ATP synthase subunit beta 2 of Bradyrhizobium sp. (strain BTAi1 / ATCC BAA-1182).